The primary structure comprises 213 residues: MYQDKILVRHLGLQPYEPVSQAMHDFTDSRDDHTPDEIWLVEHHPVFTQGQAGKAEHVLVPGDIPVIQSDRGGQVTYHGPGQQVMYVLLNLKRRKLGVRELVTLLEQTVVDTLAEYDIDAHPRADAPGVYVGEMKICSLGLRIRKGCSFHGLALNINMDLSPFLRINPCGYAGMEMTQMRQWVENATPGIIGPLLVSKLLALLNNPPHEYIPA.

Residues 32-207 enclose the BPL/LPL catalytic domain; the sequence is DHTPDEIWLV…KLLALLNNPP (176 aa). Residues 71–78, 138–140, and 151–153 contribute to the substrate site; these read RGGQVTYH, SLG, and GLA. Catalysis depends on cysteine 169, which acts as the Acyl-thioester intermediate.

This sequence belongs to the LipB family.

Its subcellular location is the cytoplasm. The enzyme catalyses octanoyl-[ACP] + L-lysyl-[protein] = N(6)-octanoyl-L-lysyl-[protein] + holo-[ACP] + H(+). Its pathway is protein modification; protein lipoylation via endogenous pathway; protein N(6)-(lipoyl)lysine from octanoyl-[acyl-carrier-protein]: step 1/2. In terms of biological role, catalyzes the transfer of endogenously produced octanoic acid from octanoyl-acyl-carrier-protein onto the lipoyl domains of lipoate-dependent enzymes. Lipoyl-ACP can also act as a substrate although octanoyl-ACP is likely to be the physiological substrate. The chain is Octanoyltransferase from Enterobacter sp. (strain 638).